We begin with the raw amino-acid sequence, 208 residues long: Peptidyl-tRNA hydrolase 2 (208 aa).

Low complexity predominate over residues 32-45 (SNASSTKKSSATLL). A disordered region spans residues 32–81 (SNASSTKKSSATLLRSKEMKEGKLHNDTDEEESESEDESDEDEDIESTSL). Residues 46–58 (RSKEMKEGKLHND) are compositionally biased toward basic and acidic residues. Residues 59 to 77 (TDEEESESEDESDEDEDIE) show a composition bias toward acidic residues. A Glycyl lysine isopeptide (Lys-Gly) (interchain with G-Cter in ubiquitin) cross-link involves residue Lys-152.

The protein belongs to the PTH2 family.

The protein localises to the cytoplasm. The enzyme catalyses an N-acyl-L-alpha-aminoacyl-tRNA + H2O = an N-acyl-L-amino acid + a tRNA + H(+). Functionally, the natural substrate for this enzyme may be peptidyl-tRNAs which drop off the ribosome during protein synthesis. In Saccharomyces cerevisiae (strain ATCC 204508 / S288c) (Baker's yeast), this protein is Peptidyl-tRNA hydrolase 2.